The following is a 363-amino-acid chain: 1,2-Dihydrovomilenine reductase (363 aa).

Residues 24–352 form the Enoyl reductase (ER) domain; it reads GILSPFKFSR…KGDVRYRFVI (329 aa). Zn(2+) is bound at residue Cys51. Residue Ser53 participates in NADP(+) binding. Residues Asp54, Glu74, Cys104, Cys107, Cys110, and Cys118 each coordinate Zn(2+). The NADP(+) site is built by Leu193, Gly195, Leu196, Ser215, Thr216, Ser217, Lys220, Lys221, Val278, Ala280, Thr302, and Arg349.

The protein belongs to the zinc-containing alcohol dehydrogenase family. Class-P subfamily. Homodimer. Zn(2+) is required as a cofactor. Mainly expressed in mature roots and, to a lower extent, in stems and leaves.

The protein localises to the cytoplasm. It catalyses the reaction 17-O-acetylnorajmaline + NADP(+) = (2R)-1,2-dihydrovomilenine + NADPH + 2 H(+). It carries out the reaction (20S)-19,20-dihydrovomilenine + NADP(+) = vomilenine + NADPH + H(+). The protein operates within alkaloid biosynthesis; ajmaline biosynthesis. In terms of biological role, alcohol dehydrogenase involved in the biosynthesis of ajmaline-type monoterpenoid indole alkaloids (MIAs) natural products, important plant-derived pharmaceuticals used in the therapy of heart disorders. Catalyzes the conversion of 1,2-dihydrovomilenine to 17-O-acetylnorajmaline, an intermediate chemical in the biosynthesis of ajmaline. Also able, with a lower efficiency, to convert vomilenine into 19,20-dihydrovomilenine. This is 1,2-Dihydrovomilenine reductase from Rauvolfia serpentina (Serpentine wood).